The sequence spans 574 residues: Arginine--tRNA ligase (574 aa).

The short motif at 124-134 (ANPNGPLHIGH) is the 'HIGH' region element.

Belongs to the class-I aminoacyl-tRNA synthetase family.

Its subcellular location is the cytoplasm. The catalysed reaction is tRNA(Arg) + L-arginine + ATP = L-arginyl-tRNA(Arg) + AMP + diphosphate. In Methanococcus aeolicus (strain ATCC BAA-1280 / DSM 17508 / OCM 812 / Nankai-3), this protein is Arginine--tRNA ligase.